Reading from the N-terminus, the 313-residue chain is Foldase protein PrsA (313 aa).

Positions 1–20 are cleaved as a signal peptide; the sequence is MKKKLLAGAITLLSVATLAA. Cys-21 carries N-palmitoyl cysteine lipidation. Cys-21 carries the S-diacylglycerol cysteine lipid modification. A PpiC domain is found at 143-241; the sequence is TPDVTAQIIR…SQYYIVKLTK (99 aa).

The protein belongs to the PrsA family.

The protein resides in the cell membrane. The enzyme catalyses [protein]-peptidylproline (omega=180) = [protein]-peptidylproline (omega=0). Functionally, plays a major role in protein secretion by helping the post-translocational extracellular folding of several secreted proteins. In Streptococcus pneumoniae (strain P1031), this protein is Foldase protein PrsA.